Consider the following 1202-residue polypeptide: Caskin-2 (1202 aa).

ANK repeat units lie at residues 48 to 77 (DGFSALHHAALGGSLELIALLLEAQATVDI), 81 to 110 (NGMRPLHYAAWQGRLEPVRLLLRASAAVNA), 114 to 143 (DGQIPLHLAAQYGHYEVSEMLLQHQSNPCL), 147 to 176 (AKKTPLDLACEFGRLKVAQLLLNSHLCVAL), 188 to 217 (NYTTPLHLAAKNGHREVIRQLLRAGIEINR), and 220 to 249 (KTGTALHEAALYGKTEVVRLLLEGGVDVNI). The residue at position 253 (Tyr-253) is a Phosphotyrosine. Residues 281–347 (SGILKVRALK…PPGIVEVVSK (67 aa)) form the SH3 domain. Residues 355–460 (RLPSAPTPLR…GLHPPSLADN (106 aa)) are disordered. Phosphoserine is present on residues Ser-358, Ser-393, Ser-396, Ser-403, Ser-406, and Ser-409. The span at 415-425 (SAGSGQSSEGT) shows a compositional bias: polar residues. Ser-471 carries the phosphoserine modification. 2 SAM domains span residues 489 to 552 (KDAQ…LSIA) and 558 to 622 (YIPT…LAEL). Disordered regions lie at residues 676–1104 (LQAA…APKP) and 1116–1181 (GPKL…STKH). Position 725 is a phosphoserine (Ser-725). Positions 731-740 (NLPEGTERPP) are enriched in basic and acidic residues. A compositionally biased stretch (pro residues) spans 765–774 (SPAPGPPPGA). 4 positions are modified to phosphoserine: Ser-858, Ser-877, Ser-878, and Ser-892. Over residues 913-923 (PSEPPGPPAPA) the composition is skewed to pro residues. Positions 940 to 949 (PPSRGSSGEG) are enriched in low complexity. Pro residues-rich tracts occupy residues 966 to 978 (PAGPPPRETPVPP) and 1018 to 1030 (PAAPLPSPTPGES). A compositionally biased stretch (low complexity) spans 1031 to 1051 (PPASSLPQPEPSSLPAQGVPT). Composition is skewed to pro residues over residues 1052-1068 (PLAPSPAMQPPVPPCPG) and 1124-1133 (GPRPVPPPRP). The segment covering 1135-1151 (STGTVGPGQAQQRLEQT) has biased composition (polar residues). Residues 1161–1172 (AAEKSIGTKEQE) show a composition bias toward basic and acidic residues.

As to quaternary structure, may not bind CASK.

The protein resides in the cytoplasm. This Homo sapiens (Human) protein is Caskin-2 (CASKIN2).